Reading from the N-terminus, the 829-residue chain is E3 ubiquitin-protein ligase Jade-2 (829 aa).

Residues 1–52 (MEEKRRKYSISSDNSDTTDGHVTSTSASRCSKLPSSTKSGWPRQNEKKPSEV) form a disordered region. S9 and S15 each carry phosphoserine. Over residues 9 to 39 (SISSDNSDTTDGHVTSTSASRCSKLPSSTKS) the composition is skewed to polar residues. K32 and K38 each carry N6-acetyllysine. S117 carries the post-translational modification Phosphoserine. A PHD-type 1 zinc finger spans residues 199–249 (DVVCDVCRSPEGEDGNEMVFCDKCNVCVHQACYGILKVPTGSWLCRTCALG). The C2HC pre-PHD-type zinc-finger motif lies at 251–285 (QPKCLLCPKRGGALKPTRSGTKWVHVSCALWIPEV). An N6-acetyllysine modification is found at K298. Residues 309 to 365 (LSCSLCKECTGTCIQCSMPSCITAFHVTCAFDRGLEMRTILADNDEVKFKSLCQEHS) form a PHD-type 2 zinc finger. Disordered regions lie at residues 362 to 383 (QEHSDGGPRSEPTSEPVEPSQA), 517 to 555 (REPSGRRSKGKKNDSKRKGREGPKGSSPEKKEKVKAGPE), and 622 to 817 (SFMR…REAG). The span at 522–535 (RRSKGKKNDSKRKG) shows a compositional bias: basic residues. The segment covering 536–552 (REGPKGSSPEKKEKVKA) has biased composition (basic and acidic residues). A compositionally biased stretch (basic residues) spans 637 to 650 (KARGRTRLPAKKKP). The span at 776 to 786 (ERPKVSLHFDT) shows a compositional bias: basic and acidic residues. The span at 792 to 806 (FSDEEMSDSEVEAED) shows a compositional bias: acidic residues.

Belongs to the JADE family. As to quaternary structure, component of the HBO1 complex composed at least of ING4 or ING5, MYST2/HBO1, MEAF6, and one of JADE1, JADE2 and JADE3. Interacts (via C-terminus) with KDM1A (via AOD/Tower domain).

The catalysed reaction is S-ubiquitinyl-[E2 ubiquitin-conjugating enzyme]-L-cysteine + [acceptor protein]-L-lysine = [E2 ubiquitin-conjugating enzyme]-L-cysteine + N(6)-ubiquitinyl-[acceptor protein]-L-lysine.. Its pathway is protein modification; protein ubiquitination. In terms of biological role, scaffold subunit of some HBO1 complexes, which have a histone H4 acetyltransferase activity. Acts as a E3 ubiquitin-protein ligase mediating the ubiquitination and subsequent proteasomal degradation of target protein histone demethylase KDM1A. Also acts as a ubiquitin ligase E3 toward itself. Positive regulator of neurogenesis. The polypeptide is E3 ubiquitin-protein ligase Jade-2 (Jade2) (Mus musculus (Mouse)).